The sequence spans 284 residues: Bifunctional protein FolD (284 aa).

166-168 is an NADP(+) binding site; that stretch reads GAS.

Belongs to the tetrahydrofolate dehydrogenase/cyclohydrolase family. Homodimer.

The enzyme catalyses (6R)-5,10-methylene-5,6,7,8-tetrahydrofolate + NADP(+) = (6R)-5,10-methenyltetrahydrofolate + NADPH. The catalysed reaction is (6R)-5,10-methenyltetrahydrofolate + H2O = (6R)-10-formyltetrahydrofolate + H(+). The protein operates within one-carbon metabolism; tetrahydrofolate interconversion. Catalyzes the oxidation of 5,10-methylenetetrahydrofolate to 5,10-methenyltetrahydrofolate and then the hydrolysis of 5,10-methenyltetrahydrofolate to 10-formyltetrahydrofolate. In Legionella pneumophila (strain Corby), this protein is Bifunctional protein FolD.